We begin with the raw amino-acid sequence, 441 residues long: Ribosomal protein uS12 methylthiotransferase RimO (441 aa).

One can recognise an MTTase N-terminal domain in the interval 7 to 117; sequence ASIAMISLGC…VVLEVHRAAP (111 aa). The [4Fe-4S] cluster site is built by C16, C52, C81, C150, C154, and C157. In terms of domain architecture, Radical SAM core spans 136 to 373; the sequence is LTPRHYAYLK…MAHQQAISAA (238 aa). The TRAM domain occupies 376–441; sequence QTRVGREIDV…DEYDLHGDAV (66 aa).

This sequence belongs to the methylthiotransferase family. RimO subfamily. [4Fe-4S] cluster is required as a cofactor.

It localises to the cytoplasm. The catalysed reaction is L-aspartate(89)-[ribosomal protein uS12]-hydrogen + (sulfur carrier)-SH + AH2 + 2 S-adenosyl-L-methionine = 3-methylsulfanyl-L-aspartate(89)-[ribosomal protein uS12]-hydrogen + (sulfur carrier)-H + 5'-deoxyadenosine + L-methionine + A + S-adenosyl-L-homocysteine + 2 H(+). In terms of biological role, catalyzes the methylthiolation of an aspartic acid residue of ribosomal protein uS12. The chain is Ribosomal protein uS12 methylthiotransferase RimO from Bordetella petrii (strain ATCC BAA-461 / DSM 12804 / CCUG 43448).